Here is a 204-residue protein sequence, read N- to C-terminus: Inner membrane-spanning protein YciB (204 aa).

The next 6 helical transmembrane spans lie at 3–23 (AEIS…VFFF), 45–65 (IFIA…VSWI), 70–90 (LPIM…LTLW), 107–127 (LFGV…GYVF), 145–165 (WGVF…MFTT), and 168–188 (WVAF…MAQM).

Belongs to the YciB family.

The protein resides in the cell inner membrane. In terms of biological role, plays a role in cell envelope biogenesis, maintenance of cell envelope integrity and membrane homeostasis. The sequence is that of Inner membrane-spanning protein YciB from Agrobacterium fabrum (strain C58 / ATCC 33970) (Agrobacterium tumefaciens (strain C58)).